Here is a 147-residue protein sequence, read N- to C-terminus: MKEETFYLVREDVLPDAMRKTLEVKKLLDRKKADSVADAVQKVDLSRSAFYKYRDAVFPFYTMVKEQIITLFFHLEDRSGALSQLLQAVADSGSNVLSIHQTIPLQGRANVTLSISTSAMEEDIHTLMNKLRKFDFVEKVEILGSGA.

The region spanning Thr-70–Ser-145 is the ACT domain.

This sequence belongs to the UPF0735 family.

This is UPF0735 ACT domain-containing protein YszB (yszB) from Bacillus subtilis (strain 168).